A 403-amino-acid polypeptide reads, in one-letter code: tRNA pseudouridine synthase D (403 aa).

Basic and acidic residues predominate over residues 1 to 10 (MTVQVQDHDI). Residues 1–24 (MTVQVQDHDITTAADTAKLPQPMQ) form a disordered region. The active-site Nucleophile is the aspartate 92. One can recognise a TRUD domain in the interval 192–354 (GVPNYFGPQR…IKAQRRALRL (163 aa)). The interval 217 to 240 (ARPVPESRPQPNKGKRKRVPREQN) is disordered.

It belongs to the pseudouridine synthase TruD family.

It catalyses the reaction uridine(13) in tRNA = pseudouridine(13) in tRNA. Its function is as follows. Responsible for synthesis of pseudouridine from uracil-13 in transfer RNAs. This Psychrobacter arcticus (strain DSM 17307 / VKM B-2377 / 273-4) protein is tRNA pseudouridine synthase D.